A 220-amino-acid polypeptide reads, in one-letter code: Small ribosomal subunit protein uS2 (220 aa).

The disordered stretch occupies residues 201 to 220 (LPPDGDLPEPPSEFEVKFKR).

Belongs to the universal ribosomal protein uS2 family.

This is Small ribosomal subunit protein uS2 from Staphylothermus marinus (strain ATCC 43588 / DSM 3639 / JCM 9404 / F1).